A 340-amino-acid polypeptide reads, in one-letter code: Protein AC11 (340 aa).

Functionally, plays an essential role in nucleocapsid egress from the host nucleus to form the budded virion (BV). Does not participate in nucleocapsid formation. This is Protein AC11 from Autographa californica nuclear polyhedrosis virus (AcMNPV).